Consider the following 299-residue polypeptide: Bifunctional protein FolD (299 aa).

Residues Gly168 to Ser170, Ser193, and Ile234 contribute to the NADP(+) site.

The protein belongs to the tetrahydrofolate dehydrogenase/cyclohydrolase family. As to quaternary structure, homodimer.

It catalyses the reaction (6R)-5,10-methylene-5,6,7,8-tetrahydrofolate + NADP(+) = (6R)-5,10-methenyltetrahydrofolate + NADPH. The enzyme catalyses (6R)-5,10-methenyltetrahydrofolate + H2O = (6R)-10-formyltetrahydrofolate + H(+). It functions in the pathway one-carbon metabolism; tetrahydrofolate interconversion. In terms of biological role, catalyzes the oxidation of 5,10-methylenetetrahydrofolate to 5,10-methenyltetrahydrofolate and then the hydrolysis of 5,10-methenyltetrahydrofolate to 10-formyltetrahydrofolate. This is Bifunctional protein FolD from Agrobacterium fabrum (strain C58 / ATCC 33970) (Agrobacterium tumefaciens (strain C58)).